Consider the following 236-residue polypeptide: Phosphoserine phosphatase (236 aa).

Residue Asp-30 is the Nucleophile of the active site. The Mg(2+) site is built by Asp-30 and Asp-32. Catalysis depends on Asp-32, which acts as the Proton donor. Substrate-binding positions include Glu-39, Arg-76, 120–121 (SG), and Lys-169. Asp-192 is a binding site for Mg(2+). Asn-195 lines the substrate pocket.

This sequence belongs to the HAD-like hydrolase superfamily. SerB family. Mg(2+) is required as a cofactor.

It catalyses the reaction O-phospho-L-serine + H2O = L-serine + phosphate. The catalysed reaction is O-phospho-D-serine + H2O = D-serine + phosphate. Its pathway is amino-acid biosynthesis; L-serine biosynthesis; L-serine from 3-phospho-D-glycerate: step 3/3. This chain is Phosphoserine phosphatase, found in Polaromonas sp. (strain JS666 / ATCC BAA-500).